The primary structure comprises 307 residues: Probable inactive peptidyl-prolyl cis-trans isomerase-like 6 (307 aa).

The PPIase cyclophilin-type domain occupies 141-304 (FLDISIDLYP…QNCVITASGQ (164 aa)).

It belongs to the cyclophilin-type PPIase family.

Functionally, probable inactive PPIase with no peptidyl-prolyl cis-trans isomerase activity. This chain is Probable inactive peptidyl-prolyl cis-trans isomerase-like 6, found in Bos taurus (Bovine).